Consider the following 423-residue polypeptide: uncharacterized protein (423 aa).

This is an uncharacterized protein from Pasteurella multocida (strain Pm70).